Consider the following 440-residue polypeptide: 3-phosphoshikimate 1-carboxyvinyltransferase (440 aa).

Positions 26, 27, and 31 each coordinate 3-phosphoshikimate. K26 contributes to the phosphoenolpyruvate binding site. 2 residues coordinate phosphoenolpyruvate: G100 and R134. Residues S180, S181, Q182, S208, D323, N346, and K350 each contribute to the 3-phosphoshikimate site. Q182 is a binding site for phosphoenolpyruvate. D323 (proton acceptor) is an active-site residue. Positions 354, 398, and 423 each coordinate phosphoenolpyruvate.

The protein belongs to the EPSP synthase family. In terms of assembly, monomer.

It is found in the cytoplasm. It catalyses the reaction 3-phosphoshikimate + phosphoenolpyruvate = 5-O-(1-carboxyvinyl)-3-phosphoshikimate + phosphate. The protein operates within metabolic intermediate biosynthesis; chorismate biosynthesis; chorismate from D-erythrose 4-phosphate and phosphoenolpyruvate: step 6/7. In terms of biological role, catalyzes the transfer of the enolpyruvyl moiety of phosphoenolpyruvate (PEP) to the 5-hydroxyl of shikimate-3-phosphate (S3P) to produce enolpyruvyl shikimate-3-phosphate and inorganic phosphate. The protein is 3-phosphoshikimate 1-carboxyvinyltransferase of Pasteurella multocida (strain Pm70).